A 594-amino-acid polypeptide reads, in one-letter code: Ferredoxin--nitrite reductase, chloroplastic (594 aa).

Residues 1–32 constitute a chloroplast transit peptide; the sequence is MASLPVNKIIPSSTTLLSSSNNNRRRNNSSIR. Positions 13–22 are enriched in low complexity; it reads STTLLSSSNN. Positions 13–36 are disordered; it reads STTLLSSSNNNRRRNNSSIRCQKA. Residues cysteine 473, cysteine 479, cysteine 514, and cysteine 518 each coordinate [4Fe-4S] cluster. Cysteine 518 contacts siroheme.

This sequence belongs to the nitrite and sulfite reductase 4Fe-4S domain family. Monomer. Siroheme is required as a cofactor. The cofactor is [4Fe-4S] cluster.

The protein localises to the plastid. It is found in the chloroplast. The catalysed reaction is 6 oxidized [2Fe-2S]-[ferredoxin] + NH4(+) + 2 H2O = nitrite + 6 reduced [2Fe-2S]-[ferredoxin] + 8 H(+). Its pathway is nitrogen metabolism; nitrate reduction (assimilation). This chain is Ferredoxin--nitrite reductase, chloroplastic (NIR), found in Spinacia oleracea (Spinach).